We begin with the raw amino-acid sequence, 1027 residues long: Kinesin heavy chain isoform 5A (1027 aa).

Ala2 is modified (N-acetylalanine). Positions 9 to 327 constitute a Kinesin motor domain; it reads SIKVLCRFRP…LMFGQRAKTI (319 aa). 86-93 contributes to the ATP binding site; sequence GQTSSGKT. The microtubule-binding stretch occupies residues 174–315; it reads VSSPEEILDV…PSSYNDAETK (142 aa). Residues 271–361 form a necessary for interaction with ZFYVE27 region; it reads EGTKSYVPYR…KTKAQKETIA (91 aa). Residues 331-906 are a coiled coil; it reads ASVNLELTAE…VDRIKEAVRY (576 aa). Residues 353 to 1027 are interaction with BICD2; it reads TKAQKETIAK…FPLHQETAAS (675 aa). At Thr397 the chain carries Phosphothreonine. The segment at 906 to 937 is disordered; it reads YKSSGKRGHSAQIAKPVRPGHYPASSPTNPYG. A globular region spans residues 907 to 1027; sequence KSSGKRGHSA…FPLHQETAAS (121 aa).

It belongs to the TRAFAC class myosin-kinesin ATPase superfamily. Kinesin family. Kinesin subfamily. As to quaternary structure, oligomer composed of two heavy chains and two light chains. Interacts with GRIP1. Interacts with FMR1 (via C-terminus); this interaction is increased in a mGluR-dependent manner. Interacts with BORCS5. Interacts with ZFYVE27. Interacts with VAPA, VAPB, SURF4, RAB11A (GDP-bound form), RAB11B (GDP-bound form) and RTN3 in a ZFYVE27-dependent manner. Interacts with BICD2. Interacts with DTNB.

The protein resides in the cytoplasm. It is found in the perinuclear region. The protein localises to the cytoskeleton. Its subcellular location is the perikaryon. The enzyme catalyses ATP + H2O + a kinesin associated with a microtubule at position (n) = ADP + phosphate a kinesin associated with a microtubule at position (n+1, toward the plus end).. Microtubule-dependent motor required for slow axonal transport of neurofilament proteins (NFH, NFM and NFL). Can induce formation of neurite-like membrane protrusions in non-neuronal cells in a ZFYVE27-dependent manner. The ZFYVE27-KIF5A complex contributes to the vesicular transport of VAPA, VAPB, SURF4, RAB11A, RAB11B and RTN3 proteins in neurons. Required for anterograde axonal transportation of MAPK8IP3/JIP3 which is essential for MAPK8IP3/JIP3 function in axon elongation. This is Kinesin heavy chain isoform 5A (Kif5a) from Mus musculus (Mouse).